The chain runs to 263 residues: Uroplakin-3b-like protein 1 (263 aa).

Residues 1-33 (MDNSWRLGPAIGLSAGQSQLLVSLLLLLTRVQP) form the signal peptide. The Extracellular portion of the chain corresponds to 34–204 (GTDVAAPEHI…PGPQSPGTVV (171 aa)). N-linked (GlcNAc...) asparagine glycans are attached at residues Asn51, Asn76, and Asn91. The chain crosses the membrane as a helical span at residues 205–225 (IIAILSILLAVLLTVLLAVLI). The Cytoplasmic segment spans residues 226–263 (YTCFNSCRSTSLSGPEEAGSVRRYTTHLAFSTPAEGAS).

It belongs to the uroplakin-3 family.

It is found in the membrane. This Homo sapiens (Human) protein is Uroplakin-3b-like protein 1.